A 498-amino-acid polypeptide reads, in one-letter code: Protein flp (498 aa).

A run of 4 helical transmembrane segments spans residues 6 to 26 (LYFL…IYIT), 389 to 409 (FNIV…FSAY), 433 to 453 (LTLC…YLIL), and 471 to 491 (LALI…LLFL).

It localises to the cell membrane. Its function is as follows. Its precise function is unknown. Has no penicillin-binding activity and is not involved in methicillin resistance. This is Protein flp (flp) from Staphylococcus aureus (strain Mu50 / ATCC 700699).